Reading from the N-terminus, the 216-residue chain is Uracil phosphoribosyltransferase (216 aa).

5-phospho-alpha-D-ribose 1-diphosphate contacts are provided by residues R85, R110, and 135–143 (DPMVATGYS). Residues I200 and 205–207 (GDA) each bind uracil. A 5-phospho-alpha-D-ribose 1-diphosphate-binding site is contributed by D206.

The protein belongs to the UPRTase family. Mg(2+) is required as a cofactor.

The catalysed reaction is UMP + diphosphate = 5-phospho-alpha-D-ribose 1-diphosphate + uracil. It functions in the pathway pyrimidine metabolism; UMP biosynthesis via salvage pathway; UMP from uracil: step 1/1. Its activity is regulated as follows. Allosterically activated by GTP. Catalyzes the conversion of uracil and 5-phospho-alpha-D-ribose 1-diphosphate (PRPP) to UMP and diphosphate. This Burkholderia ambifaria (strain MC40-6) protein is Uracil phosphoribosyltransferase.